The primary structure comprises 206 residues: Pyrrolidone-carboxylate peptidase (206 aa).

Residues Glu76, Cys139, and His163 contribute to the active site.

Belongs to the peptidase C15 family. Homotetramer.

Its subcellular location is the cytoplasm. It catalyses the reaction Release of an N-terminal pyroglutamyl group from a polypeptide, the second amino acid generally not being Pro.. Its function is as follows. Removes 5-oxoproline from various penultimate amino acid residues except L-proline. The protein is Pyrrolidone-carboxylate peptidase (pcp) of Pyrococcus horikoshii (strain ATCC 700860 / DSM 12428 / JCM 9974 / NBRC 100139 / OT-3).